A 166-amino-acid chain; its full sequence is P2Y purinoceptor 2 (166 aa).

The Cytoplasmic segment spans residues 1–24 (VHRCLGVLRPLHSLRWGRARYARR). The chain crosses the membrane as a helical span at residues 25-45 (VAAVVWVLVLACQAPVLYFVT). The Extracellular segment spans residues 46 to 72 (TSVRGTRITCHDTSARELFSHFVAYSS). The chain crosses the membrane as a helical span at residues 73–93 (VMLSLLFAVPFSVILVCYVLM). Residues 94-115 (ARRLLKPAYGTTGGLPRAKRKS) lie on the Cytoplasmic side of the membrane. A helical transmembrane segment spans residues 116–136 (VRTIALVLAVFTLCFLPFHVT). The Extracellular portion of the chain corresponds to 137–159 (RTLYYSFRSLDLSCHTLNAINMA). A helical membrane pass occupies residues 160-166 (YKITRPL).

Belongs to the G-protein coupled receptor 1 family.

The protein resides in the cell membrane. Receptor for ATP and UTP coupled to G-proteins that activate a phosphatidylinositol-calcium second messenger system. The chain is P2Y purinoceptor 2 (P2RY2) from Cricetulus griseus (Chinese hamster).